The primary structure comprises 471 residues: 3-isopropylmalate dehydratase large subunit (471 aa).

Cys351, Cys412, and Cys415 together coordinate [4Fe-4S] cluster.

It belongs to the aconitase/IPM isomerase family. LeuC type 1 subfamily. In terms of assembly, heterodimer of LeuC and LeuD. Requires [4Fe-4S] cluster as cofactor.

The enzyme catalyses (2R,3S)-3-isopropylmalate = (2S)-2-isopropylmalate. It functions in the pathway amino-acid biosynthesis; L-leucine biosynthesis; L-leucine from 3-methyl-2-oxobutanoate: step 2/4. Functionally, catalyzes the isomerization between 2-isopropylmalate and 3-isopropylmalate, via the formation of 2-isopropylmaleate. This Hahella chejuensis (strain KCTC 2396) protein is 3-isopropylmalate dehydratase large subunit.